An 85-amino-acid chain; its full sequence is CDC42 small effector protein homolog (85 aa).

S-palmitoyl cysteine attachment occurs at residues Cys-14 and Cys-15. The region spanning 37–50 (IGNPTNFVHTGHIG) is the CRIB domain. A phosphoserine mark is found at Ser-78 and Ser-81.

Belongs to the CDC42SE/SPEC family.

It is found in the cytoplasm. It localises to the cytoskeleton. The protein localises to the cell membrane. Its function is as follows. Probably involved in the organization of the actin cytoskeleton by acting downstream of CDC42, inducing actin filament assembly. The polypeptide is CDC42 small effector protein homolog (Spec2) (Drosophila melanogaster (Fruit fly)).